The sequence spans 529 residues: PTS system alpha-glucoside-specific EIICB component (529 aa).

Residues 1-416 (MMKKVQRFGG…MDLKTPGRED (416 aa)) form the PTS EIIC type-1 domain. The next 12 membrane-spanning stretches (helical) occupy residues 8-28 (FGGA…VVGL), 59-79 (GWTV…ISLA), 91-111 (FALY…FYGI), 130-150 (VPTL…VVYL), 170-190 (VFVY…TVLI), 198-218 (ISAL…IYTF), 222-242 (ILIP…GPAA), 272-292 (GGFA…ALAM), 304-324 (VAAL…TEPL), 328-348 (FLFI…TMAA), 352-372 (AFGV…LNWI), and 380-400 (GTVI…FVVF). The PTS EIIB type-1 domain maps to 450–529 (AQKGAIILEA…ERIEEMMKKG (80 aa)). Cysteine 472 functions as the Phosphocysteine intermediate; for EIIB activity in the catalytic mechanism.

The protein localises to the cell membrane. Its function is as follows. The phosphoenolpyruvate-dependent sugar phosphotransferase system (sugar PTS), a major carbohydrate active -transport system, catalyzes the phosphorylation of incoming sugar substrates concomitantly with their translocation across the cell membrane. This system is probably involved in transport of the alpha-glucosides trehalulose, turanose, maltulose and palatinose. This is PTS system alpha-glucoside-specific EIICB component from Leptotrichia buccalis (strain ATCC 14201 / DSM 1135 / JCM 12969 / NCTC 10249 / C-1013-b).